The sequence spans 386 residues: UDP-N-acetylbacillosamine transaminase (386 aa).

Substrate contacts are provided by residues 25 to 28 (NYIA), alanine 56, and serine 179. Residue lysine 184 is modified to N6-(pyridoxal phosphate)lysine. Substrate-binding positions include asparagine 227 and 325-328 (QIET).

It belongs to the DegT/DnrJ/EryC1 family. It depends on pyridoxal 5'-phosphate as a cofactor.

It catalyses the reaction UDP-N-acetylbacillosamine + 2-oxoglutarate = UDP-2-acetamido-2,6-dideoxy-alpha-D-xylo-hex-4-ulose + L-glutamate. The protein operates within protein modification; protein glycosylation. Aminotransferase involved in the bacillosamine biosynthesis pathway by producing UDP-4-amino-4,6-dideoxy-alpha-D-GlcNAc (UDP-2-acetamido-4-amino-2,4,6-trideoxy-alpha-D-glucopyranose), a precursor used in the production of the glycan component 2,4-diacetamido-2,4,6-trideoxy-alpha-D-glucopyranose. Required for host colonization and virulence. Involved in the N-linked protein glycosylation pathway. This Campylobacter jejuni subsp. jejuni serotype O:2 (strain ATCC 700819 / NCTC 11168) protein is UDP-N-acetylbacillosamine transaminase (pglE).